We begin with the raw amino-acid sequence, 156 residues long: Ribonuclease 7 (156 aa).

Residues 1–28 form the signal peptide; sequence MAPARAGFCPLLLLLLLGLWVAEIPVSA. The important for antibacterial activity stretch occupies residues 29–32; sequence KPKG. His43 (proton acceptor) is an active-site residue. Positions 43, 66, 69, and 70 each coordinate dUMP. 4 disulfide bridges follow: Cys51/Cys109, Cys65/Cys119, Cys83/Cys134, and Cys90/Cys97. The N-linked (GlcNAc...) asparagine glycan is linked to Asn127. Positions 139–140 are important for antibacterial activity; the sequence is KK. Residues His151 and Arg154 each contribute to the dUMP site. Residue His151 is the Proton donor of the active site.

As to expression, expressed in collecting ducts in kidney, and in apical uroepithelium in bladder (at protein level). Expressed in various epithelial tissues including skin, respiratory tract, genito-urinary tract and, at a low level, in the gut. Expressed in liver, kidney, skeletal muscle and heart.

The protein resides in the secreted. Its function is as follows. Exhibits a potent RNase activity. Has broad-spectrum antimicrobial activity against many pathogenic microorganisms including uropathogenic E.coli (UPEC), and remarkably potent activity (lethal dose of 90% &lt; 30 nM) against a vancomycin resistant Enterococcus faecium. Causes loss of bacterial membrane integrity. Probably contributes to urinary tract sterility. Bactericidal activity is independent of RNase activity. This chain is Ribonuclease 7 (RNASE7), found in Homo sapiens (Human).